Here is a 180-residue protein sequence, read N- to C-terminus: Insertion element IS1296 uncharacterized 21.4 kDa protein (180 aa).

Belongs to the IS150/IS1296 orfA family.

This Mycoplasma mycoides subsp. mycoides SC protein is Insertion element IS1296 uncharacterized 21.4 kDa protein.